Reading from the N-terminus, the 578-residue chain is NADPH oxidase 4 (578 aa).

Residues 1-16 lie on the Cytoplasmic side of the membrane; sequence MAVSWRSWLANEGVKH. Residues 17-37 form a helical membrane-spanning segment; the sequence is LCLFIWLSMNVLLFWKTFLLY. Over 38-62 the chain is Extracellular; that stretch reads NQGPEYHYLHQMLGLGLCLSRASAS. Positions 58-303 constitute a Ferric oxidoreductase domain; the sequence is RASASVLNLN…YCAERLYRYI (246 aa). A helical membrane pass occupies residues 63-83; it reads VLNLNCSLILLPMCRTLLAYL. The Cytoplasmic portion of the chain corresponds to 84–103; the sequence is RGSQKVPSRRTRRLLDKSRT. A helical transmembrane segment spans residues 104 to 124; sequence FHITCGVTICIFSGVHVAAHL. The Extracellular portion of the chain corresponds to 125-154; the sequence is VNALNFSVNYSEDFVELNAARYRDEDPRKL. Asn133 carries an N-linked (GlcNAc...) asparagine glycan. The chain crosses the membrane as a helical span at residues 155–175; that stretch reads LFTTVPGLTGVCMVVVLFLMI. Residues 176–188 are Cytoplasmic-facing; it reads TASTYAIRVSNYD. A helical membrane pass occupies residues 189–209; it reads IFWYTHNLFFVFYMLLTLHVS. The Extracellular portion of the chain corresponds to 210 to 424; that stretch reads GGLLKYQTNL…SPFEESLNYE (215 aa). Residues 218 to 273 form an E-loop; essential for H2O2 generating catalytic activity region; it reads NLDTHPPGCISLNRTSSQNISLPEYFSEHFHEPFPEGFSKPAEFTQHKFVKICMEE. An N-linked (GlcNAc...) asparagine glycan is attached at Asn230. A mediates interaction with TLR4 region spans residues 248–575; that stretch reads HEPFPEGFSK…YGTRFEYNKE (328 aa). The 116-residue stretch at 304 to 419 folds into the FAD-binding FR-type domain; it reads RSNKPVTIIS…DGPFGSPFEE (116 aa). A helical membrane pass occupies residues 425–445; the sequence is VSLCVAGGIGVTPFASILNTL. The Cytoplasmic segment spans residues 446 to 578; the sequence is LDDWKPYKLR…RFEYNKESFS (133 aa).

In terms of assembly, interacts with protein disulfide isomerase. Interacts with, relocalizes and stabilizes CYBA/p22phox. Interacts with TLR4. Interacts with PPP1R15A. Interacts with LRRC8A; this interaction prevents the ubiquitin-mediated degradation of LRRC8A. Heme serves as cofactor. Post-translationally, deubiquitinated by USP19. N-glycosylated and glycosylation is required for its proper function. In terms of processing, N-glycosylated. In terms of tissue distribution, expressed by distal tubular cells in kidney cortex and in endothelial cells (at protein level). Widely expressed. Strongly expressed in kidney and to a lower extent in heart, adipocytes, hepatoma, endothelial cells, skeletal muscle, brain, several brain tumor cell lines and airway epithelial cells.

It localises to the cytoplasm. The protein localises to the endoplasmic reticulum membrane. Its subcellular location is the cell membrane. It is found in the cell junction. The protein resides in the focal adhesion. It localises to the nucleus. The protein localises to the nucleolus. Its subcellular location is the perinuclear region. It carries out the reaction NADPH + 2 O2 = 2 superoxide + NADP(+) + H(+). The catalysed reaction is NADPH + O2 + H(+) = H2O2 + NADP(+). With respect to regulation, inhibited by plumbagin. Activated by phorbol 12-myristate 13-acetate (PMA). Activated by insulin. Inhibited by diphenylene iodonium. In terms of biological role, NADPH oxidase that catalyzes predominantly the reduction of oxygen to H2O2. Can also catalyze to a smaller extent, the reduction of oxygen to superoxide. May function as an oxygen sensor regulating the KCNK3/TASK-1 potassium channel and HIF1A activity. May regulate insulin signaling cascade. May play a role in apoptosis, bone resorption and lipolysaccharide-mediated activation of NFKB. May produce superoxide in the nucleus and play a role in regulating gene expression upon cell stimulation. Promotes ferroptosis, reactive oxygen species production and reduced glutathione (GSH) levels by activating NLRP3 inflammasome activation and cytokine release. NADPH oxidase that catalyzes the generation of superoxide from molecular oxygen utilizing NADPH as an electron donor. Involved in redox signaling in vascular cells. Modulates the nuclear activation of ERK1/2 and the ELK1 transcription factor, and is capable of inducing nuclear DNA damage. Its function is as follows. Lacks superoxide-generating NADPH oxidase activity. This chain is NADPH oxidase 4 (NOX4), found in Homo sapiens (Human).